A 676-amino-acid polypeptide reads, in one-letter code: Methionine--tRNA ligase (676 aa).

Residues 15 to 25 (PYANGPIHLGH) carry the 'HIGH' region motif. Positions 146, 149, 159, and 162 each coordinate Zn(2+). A 'KMSKS' region motif is present at residues 332–336 (KMSKS). K335 is a binding site for ATP. The region spanning 575–676 (DFAKIDLRIA…EGAQPGMRVK (102 aa)) is the tRNA-binding domain.

It belongs to the class-I aminoacyl-tRNA synthetase family. MetG type 1 subfamily. As to quaternary structure, homodimer. The cofactor is Zn(2+).

It localises to the cytoplasm. It carries out the reaction tRNA(Met) + L-methionine + ATP = L-methionyl-tRNA(Met) + AMP + diphosphate. Is required not only for elongation of protein synthesis but also for the initiation of all mRNA translation through initiator tRNA(fMet) aminoacylation. The sequence is that of Methionine--tRNA ligase from Shewanella sp. (strain ANA-3).